A 170-amino-acid polypeptide reads, in one-letter code: Putative pre-16S rRNA nuclease (170 aa).

Residues 1–29 (MVAASHRSPDRPGDPEGLEPGTGRGRRLG) are disordered.

The protein belongs to the YqgF nuclease family.

It is found in the cytoplasm. Its function is as follows. Could be a nuclease involved in processing of the 5'-end of pre-16S rRNA. This chain is Putative pre-16S rRNA nuclease, found in Mycobacterium ulcerans (strain Agy99).